Reading from the N-terminus, the 559-residue chain is Prolyl 4-hydroxylase subunit alpha-1 (559 aa).

A signal peptide spans 1–16 (MRLALLVLATIGYAVA). N158 is a glycosylation site (N-linked (GlcNAc...) asparagine). The 109-residue stretch at 404–512 (TAEELQIANY…KWVSNKWIHE (109 aa)) folds into the Fe2OG dioxygenase domain. 3 residues coordinate Fe cation: H422, D424, and H493. K503 contributes to the 2-oxoglutarate binding site.

This sequence belongs to the P4HA family. In terms of assembly, heterotetramer of two alpha chains and two beta chains. Exists either as a phy-1(2)/pdi-2(2) tetramer or as a phy-1/phy-2/pdi-2(2) tetramer. Fe(2+) is required as a cofactor. It depends on L-ascorbate as a cofactor.

It is found in the endoplasmic reticulum lumen. It catalyses the reaction L-prolyl-[collagen] + 2-oxoglutarate + O2 = trans-4-hydroxy-L-prolyl-[collagen] + succinate + CO2. Its function is as follows. Catalyzes the post-translational formation of 4-hydroxyproline in -Xaa-Pro-Gly- sequences in collagens and other proteins. This is Prolyl 4-hydroxylase subunit alpha-1 (dpy-18) from Caenorhabditis elegans.